Reading from the N-terminus, the 137-residue chain is Keratin-associated protein 15-1 (137 aa).

This sequence belongs to the PMG family. In terms of assembly, interacts with hair keratins.

In the hair cortex, hair keratin intermediate filaments are embedded in an interfilamentous matrix, consisting of hair keratin-associated proteins (KRTAP), which are essential for the formation of a rigid and resistant hair shaft through their extensive disulfide bond cross-linking with abundant cysteine residues of hair keratins. The matrix proteins include the high-sulfur and high-glycine-tyrosine keratins. This is Keratin-associated protein 15-1 (KRTAP15-1) from Homo sapiens (Human).